A 153-amino-acid polypeptide reads, in one-letter code: TM2 domain-containing protein DDB_G0277895 (153 aa).

Residues 3 to 50 (QKSVCVTYLLWLFFGLFGIHRFYLNRPCSGVLYLFTCGCFFIGWFIDI) form the TM2 domain. 2 helical membrane-spanning segments follow: residues 6–26 (VCVT…RFYL) and 33–53 (VLYL…ICLI). The segment at 85–153 (GSPQQQPYGA…GNYPPPYGPQ (69 aa)) is disordered. 6 tandem repeats follow at residues 89 to 96 (QQPYGAPP), 97 to 104 (QQPYGAPP), 105 to 112 (QQPYGAPP), 113 to 120 (QQPYGAPP), 121 to 128 (QQPYGAPP), and 129 to 136 (PQPYGAPP). The interval 89-136 (QQPYGAPPQQPYGAPPQQPYGAPPQQPYGAPPQQPYGAPPPQPYGAPP) is 6 X 8 AA tandem repeat of Q-Q-P-Y-G-A-P-P. A compositionally biased stretch (pro residues) spans 93-153 (GAPPQQPYGA…GNYPPPYGPQ (61 aa)).

The protein belongs to the TM2 family.

The protein localises to the membrane. The chain is TM2 domain-containing protein DDB_G0277895 from Dictyostelium discoideum (Social amoeba).